Here is a 387-residue protein sequence, read N- to C-terminus: Sulfate adenylyltransferase (387 aa).

This sequence belongs to the sulfate adenylyltransferase family.

It carries out the reaction sulfate + ATP + H(+) = adenosine 5'-phosphosulfate + diphosphate. It functions in the pathway sulfur metabolism; hydrogen sulfide biosynthesis; sulfite from sulfate: step 1/3. The polypeptide is Sulfate adenylyltransferase (sat) (Deinococcus radiodurans (strain ATCC 13939 / DSM 20539 / JCM 16871 / CCUG 27074 / LMG 4051 / NBRC 15346 / NCIMB 9279 / VKM B-1422 / R1)).